The primary structure comprises 366 residues: S-adenosylmethionine:tRNA ribosyltransferase-isomerase (366 aa).

It belongs to the QueA family. As to quaternary structure, monomer.

The protein localises to the cytoplasm. It catalyses the reaction 7-aminomethyl-7-carbaguanosine(34) in tRNA + S-adenosyl-L-methionine = epoxyqueuosine(34) in tRNA + adenine + L-methionine + 2 H(+). It functions in the pathway tRNA modification; tRNA-queuosine biosynthesis. Functionally, transfers and isomerizes the ribose moiety from AdoMet to the 7-aminomethyl group of 7-deazaguanine (preQ1-tRNA) to give epoxyqueuosine (oQ-tRNA). The chain is S-adenosylmethionine:tRNA ribosyltransferase-isomerase from Methylorubrum populi (strain ATCC BAA-705 / NCIMB 13946 / BJ001) (Methylobacterium populi).